Reading from the N-terminus, the 438-residue chain is Transposon Ty2-GR1 Gag polyprotein (438 aa).

Composition is skewed to polar residues over residues 1–11 (MESQQLHQNPH), 19–39 (ASVT…SASN), and 49–60 (KVNSQQETTPGT). Disordered regions lie at residues 1 to 86 (MESQ…GQYQ), 360 to 403 (HSEY…ATSS), and 418 to 438 (VSSQ…TERI). An RNA-binding region spans residues 295-397 (ENNINVSDRL…SSKPRAAKAH (103 aa)). Residues 369-381 (TSPNTTNTKVTTR) show a composition bias toward low complexity.

As to quaternary structure, homotrimer.

Its subcellular location is the cytoplasm. Functionally, capsid protein (CA) is the structural component of the virus-like particle (VLP), forming the shell that encapsulates the retrotransposons dimeric RNA genome. The particles are assembled from trimer-clustered units and there are holes in the capsid shells that allow for the diffusion of macromolecules. CA also has nucleocapsid-like chaperone activity, promoting primer tRNA(i)-Met annealing to the multipartite primer-binding site (PBS), dimerization of Ty2 RNA and initiation of reverse transcription. This chain is Transposon Ty2-GR1 Gag polyprotein (TY2A-GR1), found in Saccharomyces cerevisiae (strain ATCC 204508 / S288c) (Baker's yeast).